The sequence spans 289 residues: 3-hydroxy-16-methoxy-2,3-dihydrotabersonine N-methyltransferase (289 aa).

An SAM motif I region spans residues 71 to 80 (MLDVGSGLGG). The interval 134–142 (GKFDVVFTI) is SAM motif II. Residues 161 to 170 (VAAPGAAIII) form an SAM motif III region. Residues 287–289 (KSI) carry the Microbody targeting signal motif.

It belongs to the class I-like SAM-binding methyltransferase superfamily. gTMT family. Homodimer. As to expression, mainly expressed in young leaves, and, to a lower extent, in mature leaves, flowers, stems and roots (at protein level).

It is found in the thylakoid. The protein resides in the peroxisome. The catalysed reaction is (3R)-3-hydroxy-16-methoxy-2,3-dihydrotabersonine + S-adenosyl-L-methionine = deacetoxyvindoline + S-adenosyl-L-homocysteine + H(+). It participates in alkaloid biosynthesis; vindoline biosynthesis. Its activity is regulated as follows. Inhibited by gamma-tocopherol. Its function is as follows. S-adenosyl-L-methionine-dependent N-methyltransferase that catalyzes a nitrogen methylation involved in vindoline biosynthesis. Displays a strict requirement for a 2,3-dihydro bond in the aspidosperma skeleton. Can use 2,3-dihydrotabersonine, 2,3-dihydro-3-hydroxytabersonine and 2,3,6,7-tetraydro-3-hydroxytabersonine as substrates, but not tabersonine, vincadifformine, 21-hydroxycyclolochnericine, tryptamine, norharmane, harmaline, catharanthine, norajmaline, ajmaline, serpentine, ajmalicine, yohimbine or gamma-tocopherol. Inactive with picrinine as substrate. The protein is 3-hydroxy-16-methoxy-2,3-dihydrotabersonine N-methyltransferase of Catharanthus roseus (Madagascar periwinkle).